The sequence spans 64 residues: Large ribosomal subunit protein bL32 (64 aa).

Residues 1-35 (MAVQKSRVTPSRRGQRRSHDALTAKQLSTDPTSGE) are disordered.

Belongs to the bacterial ribosomal protein bL32 family.

The polypeptide is Large ribosomal subunit protein bL32 (Xanthomonas axonopodis pv. citri (strain 306)).